We begin with the raw amino-acid sequence, 999 residues long: Probable K(+)/H(+) antiporter subunit A/B (999 aa).

Residues 1-20 (MTRPASVLAGPKSRPPIHSQ) are disordered. A run of 24 helical transmembrane segments spans residues 31 to 48 (LLSV…IAIF), 63 to 85 (AIAL…GGVL), 106 to 128 (FAWL…ARYY), 138 to 160 (FFAL…NLIL), 162 to 181 (AVFW…YWHH), 191 to 213 (MALT…IGKI), 233 to 255 (PLYG…QFPF), 270 to 292 (SAYL…FWPV), 299 to 321 (WFWI…AIFQ), 336 to 358 (LGLI…VFHI), 389 to 411 (GLFH…MAGV), 442 to 464 (YVAT…GVFF), 488 to 510 (FLVL…FLHT), 530 to 552 (GWNI…YFLM), 604 to 621 (RLLV…LLLG), 636 to 653 (AFAL…GSAY), 660 to 682 (LASL…WLSA), 686 to 708 (AVTQ…RWLP), 729 to 751 (LRDL…TVMT), 788 to 807 (TLGE…ALLL), 846 to 868 (FIPA…FLFL), 878 to 900 (FAAG…TRWV), 913 to 935 (SIGL…PFLT), and 955 to 977 (ILFD…IALA).

The protein in the N-terminal section; belongs to the CPA3 antiporters (TC 2.A.63) subunit A family. This sequence in the C-terminal section; belongs to the CPA3 antiporters (TC 2.A.63) subunit B family. As to quaternary structure, may form a heterooligomeric complex that consists of six subunits: PhaAB, PhaC, PhaD, PhaE, PhaF and PhaG.

It is found in the cell membrane. Functionally, part of a K(+) efflux system which is required for the adaptation of R.meliloti to alkaline pH as well as for the infection process during symbiotic nodule development. The chain is Probable K(+)/H(+) antiporter subunit A/B (phaAB) from Rhizobium meliloti (strain 1021) (Ensifer meliloti).